We begin with the raw amino-acid sequence, 376 residues long: DNA replication and repair protein RecF (376 aa).

An ATP-binding site is contributed by 30-37 (GHNGVGKT).

Belongs to the RecF family.

The protein localises to the cytoplasm. The RecF protein is involved in DNA metabolism; it is required for DNA replication and normal SOS inducibility. RecF binds preferentially to single-stranded, linear DNA. It also seems to bind ATP. This chain is DNA replication and repair protein RecF, found in Salinispora arenicola (strain CNS-205).